The sequence spans 716 residues: Polyribonucleotide nucleotidyltransferase (716 aa).

Residues aspartate 485 and aspartate 491 each contribute to the Mg(2+) site. One can recognise a KH domain in the interval proline 552–isoleucine 611. Positions glycine 621 to arginine 689 constitute an S1 motif domain.

The protein belongs to the polyribonucleotide nucleotidyltransferase family. Mg(2+) serves as cofactor.

The protein localises to the cytoplasm. It catalyses the reaction RNA(n+1) + phosphate = RNA(n) + a ribonucleoside 5'-diphosphate. Functionally, involved in mRNA degradation. Catalyzes the phosphorolysis of single-stranded polyribonucleotides processively in the 3'- to 5'-direction. This is Polyribonucleotide nucleotidyltransferase from Gluconobacter oxydans (strain 621H) (Gluconobacter suboxydans).